The following is a 175-amino-acid chain: Probable chemoreceptor glutamine deamidase CheD (175 aa).

It belongs to the CheD family.

It catalyses the reaction L-glutaminyl-[protein] + H2O = L-glutamyl-[protein] + NH4(+). Functionally, probably deamidates glutamine residues to glutamate on methyl-accepting chemotaxis receptors (MCPs), playing an important role in chemotaxis. This chain is Probable chemoreceptor glutamine deamidase CheD, found in Jannaschia sp. (strain CCS1).